A 434-amino-acid chain; its full sequence is MSIITDVYAREVLDSRGNPTLEVEVYTESGAFGRGMVPSGASTGEHEAVELRDGDKSRYGGLGTQKAVDNVNNIIAEAIIGYDVRDQQAIDRAMIALDGTPNKGKLGANAILGVSIAVARAAADYLEIPLYSYLGGFNTKVLPTPMMNIINGGSHSDAPIAFQEFMILPVGAPTFKEALRYGAEIFHALKKILKSRGLETAVGDEGGFAPRFEGTEDGVETILAAIEAAGYVPGKDVFLGFDCASSEFYDKERKVYDYTKFEGEGAAVRTSAEQIDYLEELVNKYPIITIEDGMDENDWDGWKALTERLGKKVQLVGDDFFVTNTDYLARGIQEGAANSILIKVNQIGTLTETFEAIEMAKEAGYTAVVSHRSGETEDSTIADIAVATNAGQIKTGSLSRTDRIAKYNQLLRIEDQLGEVAEYRGLKSFYNLKK.

Gln163 contacts (2R)-2-phosphoglycerate. Glu205 (proton donor) is an active-site residue. Mg(2+) contacts are provided by Asp242, Glu291, and Asp318. Positions 343, 372, 373, and 394 each coordinate (2R)-2-phosphoglycerate. The active-site Proton acceptor is the Lys343.

It belongs to the enolase family. Mg(2+) is required as a cofactor.

The protein localises to the cytoplasm. The protein resides in the secreted. It is found in the cell surface. It localises to the cell wall. The enzyme catalyses (2R)-2-phosphoglycerate = phosphoenolpyruvate + H2O. The protein operates within carbohydrate degradation; glycolysis; pyruvate from D-glyceraldehyde 3-phosphate: step 4/5. In terms of biological role, catalyzes the reversible conversion of 2-phosphoglycerate (2-PG) into phosphoenolpyruvate (PEP). It is essential for the degradation of carbohydrates via glycolysis. This Streptococcus pneumoniae serotype 2 (strain D39 / NCTC 7466) protein is Enolase.